We begin with the raw amino-acid sequence, 353 residues long: Lipase ZK262.3 (353 aa).

A signal peptide spans 1–22 (MPKNLRFSVFLLFLLCINSVFG). Asparagine 32 and asparagine 64 each carry an N-linked (GlcNAc...) asparagine glycan. Residue serine 163 is the Nucleophile of the active site. The active-site Charge relay system is the aspartate 221. An N-linked (GlcNAc...) asparagine glycan is attached at asparagine 267. Cysteine 277 and cysteine 288 form a disulfide bridge. The Charge relay system role is filled by histidine 306.

The protein belongs to the AB hydrolase superfamily. Lipase family.

It is found in the secreted. Functionally, probable lipase. This is Lipase ZK262.3 from Caenorhabditis elegans.